We begin with the raw amino-acid sequence, 365 residues long: NAC domain-containing protein 43 (365 aa).

Residues 16–180 (VPPGFRFHPT…GWVVCRIFKK (165 aa)) enclose the NAC domain. A DNA-binding region spans residues 116–186 (IGMRKTLVFY…IFKKKNLHKT (71 aa)).

As to expression, expressed in various aboveground tissues undergoing thickening of the lignified secondary wall such as anthers, filaments of stamens, the base of carpels, styles, the boundaries between siliques and pedicels, the midrib of leaf veins, and inflorescence stems, specifically in interfascicular fibers (sclerenchyma), cells differentiating into vascular vessels, and xylary fibers (secondary xylem).

The protein resides in the nucleus. In terms of biological role, transcription activator of genes involved in biosynthesis of secondary walls. Together with NST2 and NST3, required for the secondary cell wall thickening of sclerenchymatous fibers, secondary xylem (tracheary elements), and of the anther endocethium, which is necessary for anther dehiscence. May also regulate the secondary cell wall lignification of other tissues. The chain is NAC domain-containing protein 43 (NAC043) from Arabidopsis thaliana (Mouse-ear cress).